The primary structure comprises 190 residues: Peptidyl-tRNA hydrolase (190 aa).

Phe-14 serves as a coordination point for tRNA. His-19 functions as the Proton acceptor in the catalytic mechanism. Residues Met-64, Asn-66, and Asn-112 each coordinate tRNA.

Belongs to the PTH family. As to quaternary structure, monomer.

The protein resides in the cytoplasm. It catalyses the reaction an N-acyl-L-alpha-aminoacyl-tRNA + H2O = an N-acyl-L-amino acid + a tRNA + H(+). In terms of biological role, hydrolyzes ribosome-free peptidyl-tRNAs (with 1 or more amino acids incorporated), which drop off the ribosome during protein synthesis, or as a result of ribosome stalling. Its function is as follows. Catalyzes the release of premature peptidyl moieties from peptidyl-tRNA molecules trapped in stalled 50S ribosomal subunits, and thus maintains levels of free tRNAs and 50S ribosomes. This Staphylococcus haemolyticus (strain JCSC1435) protein is Peptidyl-tRNA hydrolase.